Here is a 156-residue protein sequence, read N- to C-terminus: Ribosomal RNA large subunit methyltransferase H (156 aa).

Residues Leu73, Gly104, and 123–128 (LSALTL) each bind S-adenosyl-L-methionine.

This sequence belongs to the RNA methyltransferase RlmH family. Homodimer.

Its subcellular location is the cytoplasm. It catalyses the reaction pseudouridine(1915) in 23S rRNA + S-adenosyl-L-methionine = N(3)-methylpseudouridine(1915) in 23S rRNA + S-adenosyl-L-homocysteine + H(+). In terms of biological role, specifically methylates the pseudouridine at position 1915 (m3Psi1915) in 23S rRNA. This is Ribosomal RNA large subunit methyltransferase H from Shewanella putrefaciens (strain CN-32 / ATCC BAA-453).